Here is a 399-residue protein sequence, read N- to C-terminus: Zinc finger HIT domain-containing protein 2 (399 aa).

Met1 is subject to N-acetylmethionine. Zn(2+) contacts are provided by Cys7, Cys10, Cys22, Cys25, Cys30, Cys34, His38, and Cys41. The HIT-type zinc finger occupies 7–41; that stretch reads CGFCPAGEALPARYTCPRCNAPYCSLRCYRAHGAC. 2 disordered regions span residues 70-97 and 152-175; these read RLRE…GLSG and AEPE…AEPF. Gly residues predominate over residues 86–96; it reads LGPGARPGGLS. Thr161 is modified (phosphothreonine).

In terms of assembly, interacts (via HIT-type zinc finger) with RUVBL2 in the presence of ATP or ADP; shows a stronger interaction in the presence of ADP. As to expression, low expression in most tissues; highly expressed in testis; particularly in seminiferous tubules.

Its function is as follows. May act as a bridging factor mediating the interaction between the R2TP/Prefoldin-like (R2TP/PFDL) complex and U5 small nuclear ribonucleoprotein (U5 snRNP). Required for the interaction of R2TP complex subunit RPAP3 and prefoldin-like subunit URI1 with U5 snRNP proteins EFTUD2 and PRPF8. May play a role in regulating the composition of the U5 snRNP complex. The protein is Zinc finger HIT domain-containing protein 2 (Znhit2) of Mus musculus (Mouse).